Reading from the N-terminus, the 153-residue chain is Endoribonuclease YbeY (153 aa).

Zn(2+)-binding residues include His114, His118, and His124.

The protein belongs to the endoribonuclease YbeY family. Zn(2+) is required as a cofactor.

It localises to the cytoplasm. Functionally, single strand-specific metallo-endoribonuclease involved in late-stage 70S ribosome quality control and in maturation of the 3' terminus of the 16S rRNA. This Shewanella denitrificans (strain OS217 / ATCC BAA-1090 / DSM 15013) protein is Endoribonuclease YbeY.